The primary structure comprises 536 residues: uncharacterized protein (536 aa).

The Cytoplasmic segment spans residues 1–8 (MVSIKRYE). Residues 9-29 (IISFVIAAFFFLSGLSMWIAF) form a helical membrane-spanning segment. The Extracellular segment spans residues 30 to 502 (WPIFNSELRS…VWLGVIIVPR (473 aa)). N-linked (GlcNAc...) asparagine glycans are attached at residues asparagine 73, asparagine 236, asparagine 363, and asparagine 376. A helical membrane pass occupies residues 503–523 (IIEYLKFVLIFISICILTTLL). Over 524-536 (VIRVRVKGTVSVV) the chain is Cytoplasmic.

It belongs to the CD36 family.

Its subcellular location is the membrane. This is an uncharacterized protein from Caenorhabditis elegans.